The primary structure comprises 454 residues: Cysteine--tRNA ligase (454 aa).

Residue Cys27 participates in Zn(2+) binding. The short motif at 29–39 (PTVQDHFHIGH) is the 'HIGH' region element. 3 residues coordinate Zn(2+): Asp207, His232, and Glu236. A 'KMSKS' region motif is present at residues 265–269 (KMSKS). Residue Lys268 coordinates ATP.

It belongs to the class-I aminoacyl-tRNA synthetase family. Zn(2+) serves as cofactor.

It is found in the cytoplasm. The enzyme catalyses tRNA(Cys) + L-cysteine + ATP = L-cysteinyl-tRNA(Cys) + AMP + diphosphate. This chain is Cysteine--tRNA ligase, found in Thermoplasma volcanium (strain ATCC 51530 / DSM 4299 / JCM 9571 / NBRC 15438 / GSS1).